A 194-amino-acid chain; its full sequence is Lachesicidin (194 aa).

Residues 1-22 (MQGFFWKTWLVLAVCGTPASLA) form the signal peptide. Positions 23 to 160 (HRPLSYGEAL…DEEKDQPKRV (138 aa)) are excised as a propeptide. 2 disulfide bridges follow: C79-C90 and C101-C118. The segment covering 125–154 (EEEEEEEEEEQKAEAENDEEVEKEKEDEEK) has biased composition (acidic residues). The interval 125-157 (EEEEEEEEEEQKAEAENDEEVEKEKEDEEKDQP) is disordered.

This sequence belongs to the cathelicidin family. In terms of tissue distribution, expressed by the venom gland.

The protein localises to the secreted. The protein resides in the target cell membrane. Its function is as follows. Potent antimicrobial peptide against Gram-negative and Gram-positive bacteria. Adopts an amphipathic alpha helical conformation, that may allow to partition into the target membrane. Low hemolytic activities have been observed on mammalian cells. The sequence is that of Lachesicidin from Lachesis muta rhombeata (Bushmaster).